Reading from the N-terminus, the 263-residue chain is Acyl-[acyl-carrier-protein]--UDP-N-acetylglucosamine O-acyltransferase (263 aa).

It belongs to the transferase hexapeptide repeat family. LpxA subfamily. Homotrimer.

The protein localises to the cytoplasm. The catalysed reaction is a (3R)-hydroxyacyl-[ACP] + UDP-N-acetyl-alpha-D-glucosamine = a UDP-3-O-[(3R)-3-hydroxyacyl]-N-acetyl-alpha-D-glucosamine + holo-[ACP]. The protein operates within glycolipid biosynthesis; lipid IV(A) biosynthesis; lipid IV(A) from (3R)-3-hydroxytetradecanoyl-[acyl-carrier-protein] and UDP-N-acetyl-alpha-D-glucosamine: step 1/6. Functionally, involved in the biosynthesis of lipid A, a phosphorylated glycolipid that anchors the lipopolysaccharide to the outer membrane of the cell. This Tolumonas auensis (strain DSM 9187 / NBRC 110442 / TA 4) protein is Acyl-[acyl-carrier-protein]--UDP-N-acetylglucosamine O-acyltransferase.